We begin with the raw amino-acid sequence, 77 residues long: Acyl carrier protein (77 aa).

The 76-residue stretch at 1–76 (MDREQRIKEI…DVINYLNEKL (76 aa)) folds into the Carrier domain. O-(pantetheine 4'-phosphoryl)serine is present on Ser-36.

Belongs to the acyl carrier protein (ACP) family. In terms of processing, 4'-phosphopantetheine is transferred from CoA to a specific serine of apo-ACP by AcpS. This modification is essential for activity because fatty acids are bound in thioester linkage to the sulfhydryl of the prosthetic group.

Its subcellular location is the cytoplasm. It participates in lipid metabolism; fatty acid biosynthesis. Its function is as follows. Carrier of the growing fatty acid chain in fatty acid biosynthesis. In Hydrogenobaculum sp. (strain Y04AAS1), this protein is Acyl carrier protein.